The primary structure comprises 594 residues: Aspartate--tRNA(Asp/Asn) ligase (594 aa).

Position 176 (Glu-176) interacts with L-aspartate. The segment at 200–203 (QIFK) is aspartate. Residue Arg-222 participates in L-aspartate binding. ATP is bound by residues 222–224 (RDE) and Gln-231. His-450 is a binding site for L-aspartate. An ATP-binding site is contributed by Glu-484. Arg-491 is an L-aspartate binding site. 536-539 (GLDR) contributes to the ATP binding site.

The protein belongs to the class-II aminoacyl-tRNA synthetase family. Type 1 subfamily. Homodimer.

Its subcellular location is the cytoplasm. It carries out the reaction tRNA(Asx) + L-aspartate + ATP = L-aspartyl-tRNA(Asx) + AMP + diphosphate. Functionally, aspartyl-tRNA synthetase with relaxed tRNA specificity since it is able to aspartylate not only its cognate tRNA(Asp) but also tRNA(Asn). Reaction proceeds in two steps: L-aspartate is first activated by ATP to form Asp-AMP and then transferred to the acceptor end of tRNA(Asp/Asn). This chain is Aspartate--tRNA(Asp/Asn) ligase, found in Geobacillus sp. (strain WCH70).